We begin with the raw amino-acid sequence, 891 residues long: Dynein axonemal intermediate chain 3 (891 aa).

Positions 1 to 17 (MAPKQKKKTSRGKKRLK) are enriched in basic residues. Residues 1-22 (MAPKQKKKTSRGKKRLKPVLAA) form a disordered region. WD repeat units lie at residues 395–435 (ESPD…DRIE), 477–533 (GHKK…PLTP), 670–709 (IHDGTVHTIQRSPFYNDIILTVGGWNVAIWKEGVMTGPLL), and 713–753 (CAPK…HEPA). Positions 818–861 (LEYVEQRKKIREQEKKEMELEMAKKKVKTYQKSKEQMQAELKMD) form a coiled coil.

Interacts with ACTR2; this interaction reduces binding of the Arp2/3 complex to the VCA domain of nucleation promoting factors. Part of the multisubunit axonemal dynein complex formed at least of two heavy chains and a number of intermediate and light chains. Found in a associated with the catalytic heavy chain DNAH2, the intermediate chain DNAI4, and the light chain DYNLT1.

It is found in the cytoplasm. Its function is as follows. Acts as a negative regulator of cell migration, invasion, and metastasis downstream of p53/TP53, through inhibition of Arp2/3 complex-mediated actin polymerization. Via its association with the multisubunit axonemal dynein complex, is potentially involved in the regulation of cilia function. May play a role in osteogenesis of dental tissue-derived mesenchymal stem cells. The protein is Dynein axonemal intermediate chain 3 of Homo sapiens (Human).